We begin with the raw amino-acid sequence, 760 residues long: GLC7-interacting protein 4 (760 aa).

Disordered stretches follow at residues 449–573 (KKKP…SLQS) and 593–626 (KSASTPNPSASSSLAPSPKVSSINNTSSGKSSST). 2 stretches are compositionally biased toward low complexity: residues 454 to 474 (ITKLPASSSPSPSPTSSASPS) and 494 to 506 (SSRSPSVSPVRTT). Phosphoserine is present on residues serine 497 and serine 501. Residues 512 to 525 (AETKKSVVSPEKRK) are compositionally biased toward basic and acidic residues. The span at 534-554 (SSSLQSYTNKQQTSYLNSTRH) shows a compositional bias: polar residues. 2 stretches are compositionally biased toward low complexity: residues 561-573 (SKLNNQRSNSLQS) and 594-626 (SASTPNPSASSSLAPSPKVSSINNTSSGKSSST). Residue serine 609 is modified to Phosphoserine.

The protein belongs to the GIP4 family. Interacts with GLC7.

The protein resides in the cytoplasm. GLC7 phosphatase-regulatory protein involved in GLC7 subcellular redistribution and chromosome segregation. The sequence is that of GLC7-interacting protein 4 (GIP4) from Saccharomyces cerevisiae (strain ATCC 204508 / S288c) (Baker's yeast).